Consider the following 504-residue polypeptide: Chorion-specific transcription factor GCMb (504 aa).

Residues 19-174 (LTWDINDPQM…KSETEGRRSA (156 aa)) constitute a DNA-binding region (GCM). Positions 81, 87, 91, 118, 121, 130, 157, and 159 each coordinate Zn(2+). 2 stretches are compositionally biased toward basic and acidic residues: residues 155-172 (GVHD…EGRR) and 188-203 (RRSE…DIRG). Residues 155-203 (GVHDHPRPESKSETEGRRSALKRQMASFYQPQKRRSEEPEARSTQDIRG) form a disordered region. The interval 379-393 (LQTVITTTVAYQAYQ) is C-terminal conserved inhibitory domain (CCID). Residues 438–472 (ASPSGRAPLKVPGDCQAPRPTLDFPQEADPSGTDG) are disordered.

The protein resides in the nucleus. In terms of biological role, transcription factor that binds specific sequences on gene promoters and activate their transcription. Through the regulation of gene transcription, may play a role in parathyroid gland development. The sequence is that of Chorion-specific transcription factor GCMb from Mus musculus (Mouse).